The following is a 376-amino-acid chain: Alcohol dehydrogenase class-3 (376 aa).

An N-acetylserine modification is found at Ser1. Zn(2+) contacts are provided by Cys47, His69, Cys99, Cys102, Cys105, Cys113, and Cys176.

This sequence belongs to the zinc-containing alcohol dehydrogenase family. Class-III subfamily. As to quaternary structure, homodimer. Requires Zn(2+) as cofactor. As to expression, liver and gut.

Its subcellular location is the cytoplasm. The catalysed reaction is a primary alcohol + NAD(+) = an aldehyde + NADH + H(+). The enzyme catalyses a secondary alcohol + NAD(+) = a ketone + NADH + H(+). It catalyses the reaction S-(hydroxymethyl)glutathione + NADP(+) = S-formylglutathione + NADPH + H(+). It carries out the reaction S-(hydroxymethyl)glutathione + NAD(+) = S-formylglutathione + NADH + H(+). The catalysed reaction is S-nitrosoglutathione + NADH + H(+) = S-(hydroxysulfenamide)glutathione + NAD(+). In terms of biological role, class-III ADH is remarkably ineffective in oxidizing ethanol, but it readily catalyzes the oxidation of long-chain primary alcohols and the oxidation of S-(hydroxymethyl) glutathione. Also acts as a S-nitroso-glutathione reductase by catalyzing the NADH-dependent reduction of S-nitrosoglutathione, thereby regulating protein S-nitrosylation. The chain is Alcohol dehydrogenase class-3 from Myxine glutinosa (Atlantic hagfish).